We begin with the raw amino-acid sequence, 213 residues long: Leucyl/phenylalanyl-tRNA--protein transferase (213 aa).

Belongs to the L/F-transferase family.

It is found in the cytoplasm. The catalysed reaction is N-terminal L-lysyl-[protein] + L-leucyl-tRNA(Leu) = N-terminal L-leucyl-L-lysyl-[protein] + tRNA(Leu) + H(+). The enzyme catalyses N-terminal L-arginyl-[protein] + L-leucyl-tRNA(Leu) = N-terminal L-leucyl-L-arginyl-[protein] + tRNA(Leu) + H(+). It carries out the reaction L-phenylalanyl-tRNA(Phe) + an N-terminal L-alpha-aminoacyl-[protein] = an N-terminal L-phenylalanyl-L-alpha-aminoacyl-[protein] + tRNA(Phe). Functions in the N-end rule pathway of protein degradation where it conjugates Leu, Phe and, less efficiently, Met from aminoacyl-tRNAs to the N-termini of proteins containing an N-terminal arginine or lysine. The sequence is that of Leucyl/phenylalanyl-tRNA--protein transferase from Campylobacter lari (strain RM2100 / D67 / ATCC BAA-1060).